Reading from the N-terminus, the 584-residue chain is Membrane frizzled-related protein (584 aa).

Residues 1 to 69 (MKDYDDVILR…QPDCHFSWFC (69 aa)) lie on the Cytoplasmic side of the membrane. Residues 70-90 (ILLLSGLLLLLLGLLVAVILA) form a helical; Signal-anchor for type II membrane protein membrane-spanning segment. The Extracellular portion of the chain corresponds to 91-584 (QLQATSLPRT…AASLEACSQP (494 aa)). Positions 108-140 (RGLTPMGVIPSTTPNTTTTTTTTTPARTGQQEA) are disordered. The segment covering 119 to 132 (TTPNTTTTTTTTTP) has biased composition (low complexity). Intrachain disulfides connect C150/C176 and C203/C222. Residues 150–259 (CGGLLPGPSG…SGFQAWYQAV (110 aa)) form the CUB 1 domain. N-linked (GlcNAc...) asparagine glycosylation is present at N233. The LDL-receptor class A 1 domain occupies 265–301 (SCAHNEFHCDLLLCLKRDSVCDGITECADGSDEANCS). Cystine bridges form between C266–C278, C273–C291, C285–C300, C307–C333, and C360–C383. Residues 307-420 (CGGNLTGLYG…GGFLATYQAI (114 aa)) form the CUB 2 domain. An N-linked (GlcNAc...) asparagine glycan is attached at N421. The 35-residue stretch at 426–460 (GCPWAEFCQSGGYRDLQWMCDLWKDCANDSNDNCS) folds into the LDL-receptor class A 2 domain. 7 cysteine pairs are disulfide-bonded: C433/C451, C445/C459, C471/C533, C479/C526, C517/C554, C543/C581, and C547/C569. N458 is a glycosylation site (N-linked (GlcNAc...) asparagine). The region spanning 466–584 (QPDLTCEPVQ…AASLEACSQP (119 aa)) is the FZ domain.

Interacts with C1QTNF5. In terms of tissue distribution, expressed in retinal pigment epithelium and ciliary epithelium of the eye.

Its subcellular location is the apical cell membrane. Functionally, may play a role in eye development. This is Membrane frizzled-related protein (Mfrp) from Mus musculus (Mouse).